Reading from the N-terminus, the 558-residue chain is S-layer protein (558 aa).

An N-terminal signal peptide occupies residues 1–28 (MAMSLKKIGAIAVGGAMVATALASGVAA). Residues asparagine 112, asparagine 138, asparagine 158, asparagine 197, asparagine 226, asparagine 291, and asparagine 374 are each glycosylated (N-linked (GlcNAc...) asparagine).

It belongs to the Mj S-layer protein family.

It localises to the secreted. It is found in the cell wall. The protein localises to the S-layer. Its function is as follows. S-layer protein. The S-layer is a paracrystalline mono-layered assembly of proteins which coat the surface of the cell. The chain is S-layer protein (sla) from Methanocaldococcus jannaschii (strain ATCC 43067 / DSM 2661 / JAL-1 / JCM 10045 / NBRC 100440) (Methanococcus jannaschii).